The sequence spans 100 residues: uncharacterized protein (100 aa).

A disordered region spans residues 42–84 (PGEPWRTAGGIGEGGAGGDGAAAGGEGDVHGRPAGAEDGEDGA). Positions 50–67 (GGIGEGGAGGDGAAAGGE) are enriched in gly residues.

This is an uncharacterized protein from Torque teno tamarin virus (isolate So-TTV2).